A 291-amino-acid chain; its full sequence is Nucleotide-binding protein LMHCC_0126 (291 aa).

Residue 13–20 (GMSGAGKT) coordinates ATP. 63-66 (DLRG) serves as a coordination point for GTP.

It belongs to the RapZ-like family.

Displays ATPase and GTPase activities. In Listeria monocytogenes serotype 4a (strain HCC23), this protein is Nucleotide-binding protein LMHCC_0126.